The following is a 634-amino-acid chain: Sodium-dependent neutral amino acid transporter B(0)AT1 (634 aa).

Residues 1–41 (MVRLVLPNPGLDARIPSLAELETIEQEEASSRPKWDNKAQY) lie on the Cytoplasmic side of the membrane. Ser-17 carries the phosphoserine modification. A helical membrane pass occupies residues 42-62 (MLTCLGFCVGLGNVWRFPYLC). The Extracellular segment spans residues 63 to 67 (QSHGG). The helical transmembrane segment at 68–88 (GAFMIPFLILLVLEGIPLLYL) threads the bilayer. At 89–120 (EFAIGQRLRRGSLGVWSSIHPALKGLGLASML) the chain is on the cytoplasmic side. A helical membrane pass occupies residues 121 to 141 (TSFMVGLYYNTIISWIMWYLF). Over 142-192 (NSFQEPLPWSDCPLNENQTGYVDECARSSPVDYFWYRETLNISTSISDSGS) the chain is Extracellular. N-linked (GlcNAc...) asparagine glycans are attached at residues Asn-158 and Asn-182. Residues 193 to 213 (IQWWMLLCLACAWSVLYMCTI) traverse the membrane as a helical segment. Residues 214–221 (RGIETTGK) lie on the Cytoplasmic side of the membrane. The chain crosses the membrane as a helical span at residues 222–242 (AVYITSTLPYVVLTIFLIRGL). Residues 243 to 268 (TLKGATNGIVFLFTPNVTELAQPDTW) are Extracellular-facing. N-linked (GlcNAc...) asparagine glycosylation occurs at Asn-258. The helical transmembrane segment at 269–289 (LDAGAQVFFSFSLAFGGLISF) threads the bilayer. Residues 290–304 (SSYNSVHNNCEKDSV) are Cytoplasmic-facing. Residues 305 to 325 (IVSIINGFTSVYVAIVVYSVI) form a helical membrane-spanning segment. Over 326 to 413 (GFRATQRYDD…TEAITKMPLS (88 aa)) the chain is Extracellular. Asn-354 and Asn-368 each carry an N-linked (GlcNAc...) asparagine glycan. A helical membrane pass occupies residues 414–434 (PLWSVLFFIMLFCLGLSSMFG). The Cytoplasmic portion of the chain corresponds to 435 to 456 (NMEGVVVPLQDLRVIPPKWPKE). A helical membrane pass occupies residues 457–477 (VLTGLICLGTFLIGFIFTLNS). Residues 478 to 490 (GQYWLSLLDSYAG) lie on the Extracellular side of the membrane. Residues 491-511 (SIPLLIIAFCEMFSVVYVYGV) form a helical membrane-spanning segment. Residues 512–531 (DRFNKDIEFMIGHKPNIFWQ) lie on the Cytoplasmic side of the membrane. Residues 532–552 (VTWRVVSPLLMLIIFLFFFVV) traverse the membrane as a helical segment. At 553 to 581 (EVSQELTYSIWDPGYEEFPKSQKISYPNW) the chain is on the extracellular side. The chain crosses the membrane as a helical span at residues 582–602 (VYVVVVIVAGVPSLTIPGYAI). Topologically, residues 603-634 (YKLIRNHCQKPGDHQGLVSTLSTASMNGDLKY) are cytoplasmic. Position 627 is a phosphoserine (Ser-627).

This sequence belongs to the sodium:neurotransmitter symporter (SNF) (TC 2.A.22) family. SLC6A19 subfamily. As to quaternary structure, interacts in a tissue-specific manner with ACE2 in small intestine and with CLTRN in the kidney. Interacts with CLTRN; this interaction is required for trafficking of SLC6A19 to the plasma membrane and for its catalytic activation in kidneys. Interacts with ACE2; this interaction is required for trafficking of SLC6A19 to the plasma membrane and for its catalytic activation in intestine. Interacts with ANPEP; the interaction positively regulates its amino acid transporter activity. In terms of tissue distribution, robust expression in kidney and small intestine, with minimal expression in pancreas. Also expressed in stomach, liver, duodenum, ileocecum, colon and prostate. Not detected in testis, whole brain, cerebellum, fetal liver, spleen, skeletal muscle, uterus, heart or lung.

It is found in the cell membrane. The protein resides in the apical cell membrane. The enzyme catalyses L-alanine(in) + Na(+)(in) = L-alanine(out) + Na(+)(out). The catalysed reaction is L-cysteine(in) + Na(+)(in) = L-cysteine(out) + Na(+)(out). It catalyses the reaction L-glutamine(in) + Na(+)(in) = L-glutamine(out) + Na(+)(out). It carries out the reaction glycine(in) + Na(+)(in) = glycine(out) + Na(+)(out). The enzyme catalyses L-isoleucine(in) + Na(+)(in) = L-isoleucine(out) + Na(+)(out). The catalysed reaction is L-leucine(in) + Na(+)(in) = L-leucine(out) + Na(+)(out). It catalyses the reaction L-methionine(in) + Na(+)(in) = L-methionine(out) + Na(+)(out). It carries out the reaction L-phenylalanine(in) + Na(+)(in) = L-phenylalanine(out) + Na(+)(out). The enzyme catalyses L-serine(in) + Na(+)(in) = L-serine(out) + Na(+)(out). The catalysed reaction is L-tryptophan(in) + Na(+)(in) = L-tryptophan(out) + Na(+)(out). It catalyses the reaction L-tyrosine(in) + Na(+)(in) = L-tyrosine(out) + Na(+)(out). It carries out the reaction L-valine(in) + Na(+)(in) = L-valine(out) + Na(+)(out). Functionally, transporter that mediates resorption of neutral amino acids across the apical membrane of renal and intestinal epithelial cells. This uptake is sodium-dependent and chloride-independent. Requires CLTRN in kidney or ACE2 in intestine for cell surface expression and amino acid transporter activity. The protein is Sodium-dependent neutral amino acid transporter B(0)AT1 (SLC6A19) of Homo sapiens (Human).